The chain runs to 326 residues: DnaJ homolog subfamily B member 6 (326 aa).

The J domain maps to 2 to 69 (VDYYEVLGVQ…KKRDIYDKYG (68 aa)). The tract at residues 2-146 (VDYYEVLGVQ…TGSFFSAFSG (145 aa)) is interaction with HSP70. The interaction with KRT18 stretch occupies residues 119 to 242 (FEDFFGNRRG…ADDDALAEER (124 aa)). R135 carries the post-translational modification Omega-N-methylarginine. Positions 249-326 (ALPAQPAGLR…KKKKSTKGNH (78 aa)) are disordered. S277 bears the Phosphoserine mark.

As to quaternary structure, homooligomer. Interacts with BAG3, HSPB8 and STUB1. Interacts with ALKBH1. Interacts with HSP70, KRT18 and PTTG. In terms of assembly, interacts with histone deacetylases HDAC4, HDAC6, and SIRT2, HDAC activity is required for antiaggregation. Widely expressed. Highest levels in testis and brain, and lower levels in heart, spleen, intestine, ovary, placenta, lung, kidney, pancreas, thymus, prostate, skeletal muscle, liver and leukocytes. In testis, expressed in germ cells in the earlier stages of differentiation pathway as well as in spermatids. In brain, expressed at a higher level in hippocampus and thalamus and a lower level in amygdala, substantia nigra, corpus callosum and caudate nucleus.

It localises to the cytoplasm. The protein localises to the perinuclear region. Its subcellular location is the nucleus. It is found in the myofibril. The protein resides in the sarcomere. It localises to the z line. Functionally, has a stimulatory effect on the ATPase activity of HSP70 in a dose-dependent and time-dependent manner and hence acts as a co-chaperone of HSP70. Plays an indispensable role in the organization of KRT8/KRT18 filaments. Acts as an endogenous molecular chaperone for neuronal proteins including huntingtin. Suppresses aggregation and toxicity of polyglutamine-containing, aggregation-prone proteins. Also reduces cellular toxicity and caspase-3 activity. Isoform B but not isoform A inhibits huntingtin aggregation. The protein is DnaJ homolog subfamily B member 6 (DNAJB6) of Homo sapiens (Human).